An 804-amino-acid chain; its full sequence is Leucine--tRNA ligase (804 aa).

The short motif at 40 to 51 is the 'HIGH' region element; the sequence is PYPSGAGLHVGH. The 'KMSKS' region signature appears at 576-580; the sequence is KMSKS. K579 lines the ATP pocket.

This sequence belongs to the class-I aminoacyl-tRNA synthetase family.

The protein resides in the cytoplasm. It carries out the reaction tRNA(Leu) + L-leucine + ATP = L-leucyl-tRNA(Leu) + AMP + diphosphate. The sequence is that of Leucine--tRNA ligase from Bacillus velezensis (strain DSM 23117 / BGSC 10A6 / LMG 26770 / FZB42) (Bacillus amyloliquefaciens subsp. plantarum).